The following is a 190-amino-acid chain: Crossover junction endodeoxyribonuclease RuvC (190 aa).

Active-site residues include D7, E68, and D141. Mg(2+) is bound by residues D7, E68, and D141.

It belongs to the RuvC family. Homodimer which binds Holliday junction (HJ) DNA. The HJ becomes 2-fold symmetrical on binding to RuvC with unstacked arms; it has a different conformation from HJ DNA in complex with RuvA. In the full resolvosome a probable DNA-RuvA(4)-RuvB(12)-RuvC(2) complex forms which resolves the HJ. Mg(2+) is required as a cofactor.

The protein localises to the cytoplasm. The catalysed reaction is Endonucleolytic cleavage at a junction such as a reciprocal single-stranded crossover between two homologous DNA duplexes (Holliday junction).. Its function is as follows. The RuvA-RuvB-RuvC complex processes Holliday junction (HJ) DNA during genetic recombination and DNA repair. Endonuclease that resolves HJ intermediates. Cleaves cruciform DNA by making single-stranded nicks across the HJ at symmetrical positions within the homologous arms, yielding a 5'-phosphate and a 3'-hydroxyl group; requires a central core of homology in the junction. The consensus cleavage sequence is 5'-(A/T)TT(C/G)-3'. Cleavage occurs on the 3'-side of the TT dinucleotide at the point of strand exchange. HJ branch migration catalyzed by RuvA-RuvB allows RuvC to scan DNA until it finds its consensus sequence, where it cleaves and resolves the cruciform DNA. This chain is Crossover junction endodeoxyribonuclease RuvC, found in Endomicrobium trichonymphae.